The chain runs to 525 residues: Nucleolar complex protein 4 homolog B (525 aa).

Over residues 1–10 (MAARKAKHAF) the composition is skewed to basic residues. Residues 1–21 (MAARKAKHAFRSQATQSDAER) are disordered. Helical transmembrane passes span 307–327 (AAYDVGGAISLLALNGLFILI), 358–378 (FFHLANLFLSSTHLPVYLVAA), and 386–406 (LALTAPPQVLLMIIPFICNLI).

Belongs to the CBF/MAK21 family.

Its subcellular location is the nucleus membrane. It is found in the nucleus. The protein resides in the nucleolus. The chain is Nucleolar complex protein 4 homolog B (noc4l-b) from Xenopus laevis (African clawed frog).